Here is a 215-residue protein sequence, read N- to C-terminus: 3-demethoxyubiquinol 3-hydroxylase (215 aa).

The Fe cation site is built by E64, E94, H97, E146, E178, and H181.

It belongs to the COQ7 family. Fe cation serves as cofactor.

The protein localises to the cell membrane. It catalyses the reaction a 5-methoxy-2-methyl-3-(all-trans-polyprenyl)benzene-1,4-diol + AH2 + O2 = a 3-demethylubiquinol + A + H2O. It functions in the pathway cofactor biosynthesis; ubiquinone biosynthesis. Functionally, catalyzes the hydroxylation of 2-nonaprenyl-3-methyl-6-methoxy-1,4-benzoquinol during ubiquinone biosynthesis. This is 3-demethoxyubiquinol 3-hydroxylase from Coxiella burnetii (strain CbuG_Q212) (Coxiella burnetii (strain Q212)).